The following is a 220-amino-acid chain: Protein-methionine-sulfoxide reductase heme-binding subunit MsrQ (220 aa).

5 consecutive transmembrane segments (helical) span residues I20–S40, E52–I72, A86–D106, P122–N142, and L159–P179.

Belongs to the MsrQ family. In terms of assembly, heterodimer of a catalytic subunit (MsrP) and a heme-binding subunit (MsrQ). The cofactor is FMN. Heme b serves as cofactor.

The protein localises to the cell inner membrane. Part of the MsrPQ system that repairs oxidized periplasmic proteins containing methionine sulfoxide residues (Met-O), using respiratory chain electrons. Thus protects these proteins from oxidative-stress damage caused by reactive species of oxygen and chlorine generated by the host defense mechanisms. MsrPQ is essential for the maintenance of envelope integrity under bleach stress, rescuing a wide series of structurally unrelated periplasmic proteins from methionine oxidation. MsrQ provides electrons for reduction to the reductase catalytic subunit MsrP, using the quinone pool of the respiratory chain. The polypeptide is Protein-methionine-sulfoxide reductase heme-binding subunit MsrQ (Brucella anthropi (strain ATCC 49188 / DSM 6882 / CCUG 24695 / JCM 21032 / LMG 3331 / NBRC 15819 / NCTC 12168 / Alc 37) (Ochrobactrum anthropi)).